The primary structure comprises 252 residues: 3-deoxy-manno-octulosonate cytidylyltransferase (252 aa).

This sequence belongs to the KdsB family.

The protein localises to the cytoplasm. It catalyses the reaction 3-deoxy-alpha-D-manno-oct-2-ulosonate + CTP = CMP-3-deoxy-beta-D-manno-octulosonate + diphosphate. It functions in the pathway nucleotide-sugar biosynthesis; CMP-3-deoxy-D-manno-octulosonate biosynthesis; CMP-3-deoxy-D-manno-octulosonate from 3-deoxy-D-manno-octulosonate and CTP: step 1/1. The protein operates within bacterial outer membrane biogenesis; lipopolysaccharide biosynthesis. In terms of biological role, activates KDO (a required 8-carbon sugar) for incorporation into bacterial lipopolysaccharide in Gram-negative bacteria. In Phocaeicola vulgatus (strain ATCC 8482 / DSM 1447 / JCM 5826 / CCUG 4940 / NBRC 14291 / NCTC 11154) (Bacteroides vulgatus), this protein is 3-deoxy-manno-octulosonate cytidylyltransferase.